The sequence spans 126 residues: Nitrogenase-stabilizing/protective protein NifW (126 aa).

The tract at residues 104 to 126 is disordered; the sequence is VPMSEITVERPATTQTDEKGQQR.

Belongs to the NifW family. As to quaternary structure, homotrimer; associates with NifD.

May protect the nitrogenase Fe-Mo protein from oxidative damage. This is Nitrogenase-stabilizing/protective protein NifW from Parafrankia sp. (strain EAN1pec).